Reading from the N-terminus, the 154-residue chain is Myoglobin (154 aa).

Residues 2 to 148 (GLSDGEWQLV…FRNDIAAKYK (147 aa)) enclose the Globin domain. Position 4 is a phosphoserine (serine 4). Histidine 65 lines the nitrite pocket. Residue histidine 65 participates in O2 binding. Position 68 is a phosphothreonine (threonine 68). Histidine 94 provides a ligand contact to heme b.

This sequence belongs to the globin family. As to quaternary structure, monomeric.

The protein resides in the cytoplasm. It localises to the sarcoplasm. It catalyses the reaction Fe(III)-heme b-[protein] + nitric oxide + H2O = Fe(II)-heme b-[protein] + nitrite + 2 H(+). The enzyme catalyses H2O2 + AH2 = A + 2 H2O. Functionally, monomeric heme protein which primary function is to store oxygen and facilitate its diffusion within muscle tissues. Reversibly binds oxygen through a pentacoordinated heme iron and enables its timely and efficient release as needed during periods of heightened demand. Depending on the oxidative conditions of tissues and cells, and in addition to its ability to bind oxygen, it also has a nitrite reductase activity whereby it regulates the production of bioactive nitric oxide. Under stress conditions, like hypoxia and anoxia, it also protects cells against reactive oxygen species thanks to its pseudoperoxidase activity. In Proechimys guairae (Guaira spiny rat), this protein is Myoglobin (MB).